The following is a 108-amino-acid chain: Large ribosomal subunit protein uL24 (108 aa).

The protein belongs to the universal ribosomal protein uL24 family. Part of the 50S ribosomal subunit.

Its function is as follows. One of two assembly initiator proteins, it binds directly to the 5'-end of the 23S rRNA, where it nucleates assembly of the 50S subunit. In terms of biological role, one of the proteins that surrounds the polypeptide exit tunnel on the outside of the subunit. The chain is Large ribosomal subunit protein uL24 from Mycoplasma capricolum subsp. capricolum (strain California kid / ATCC 27343 / NCTC 10154).